We begin with the raw amino-acid sequence, 760 residues long: ATP-dependent zinc metalloprotease FtsH (760 aa).

Topologically, residues 1–5 are cytoplasmic; it reads MNRKN. Residues 6-26 form a helical membrane-spanning segment; sequence VTRTITAIAVVVLLGWSFFYF. The Extracellular portion of the chain corresponds to 27-110; the sequence is SDDTRGYKPV…KVSTVVNQGS (84 aa). Residues 111-131 form a helical membrane-spanning segment; sequence ILGELLVYVLPLLLLVGLFVM. Residues 132–760 lie on the Cytoplasmic side of the membrane; sequence FSRMQGGARM…EVSRTKPAHG (629 aa). Residue 203–210 participates in ATP binding; sequence GPPGTGKT. H425 provides a ligand contact to Zn(2+). The active site involves E426. The Zn(2+) site is built by H429 and D501. The tract at residues 616–760 is disordered; that stretch reads DFGGRIPSDK…EVSRTKPAHG (145 aa). Positions 650-669 are enriched in low complexity; the sequence is AFKAAIAQATQAAEAARSDA. Acidic residues predominate over residues 740-750; it reads GSDESSAEQDD.

In the central section; belongs to the AAA ATPase family. It in the C-terminal section; belongs to the peptidase M41 family. As to quaternary structure, homohexamer. It depends on Zn(2+) as a cofactor.

Its subcellular location is the cell membrane. Acts as a processive, ATP-dependent zinc metallopeptidase for both cytoplasmic and membrane proteins. Plays a role in the quality control of integral membrane proteins. In Mycobacterium bovis (strain ATCC BAA-935 / AF2122/97), this protein is ATP-dependent zinc metalloprotease FtsH.